Consider the following 547-residue polypeptide: MSLVESPPWQALKSKYQELSSLHMRDFFAQDKKRGTRLSLEAAGLYFDYSKNRVDEKTIDLLCESANACNLPLRIEQLFSGKLTNESGEMVGFHTALRQVNNFSFKTNNNAIQEIHASWEKIKKLSIRIREGDYKGFTNKSITDIVNIGIGGSSLGPQMAYNALKPYVKAPLRCHFISNLDDTDFYETVRTLNPETTLFIITSKTFTTKETLENARRATEWLMQAAKKENLIQTHFMAVTAAPEKAHEFGIQKDNIFMLWPWVGGRFSVWSAAGLSLAIAIGWEEFFEFLRGAHAMDTHFRQAEFNKNMPILLALLSIWYINFFHAKTQAIIPYSQRLVYLPDYLTQLHMESLGKSVQLDGSAVHWQTGAVVWGDLGTNSQHSFHQLFLQGTMVIPVDFIAFLKNSRESHWQLPLIANCLGQSQTLMEGYDKEGVMRDLINQGIEHEKAEKLATYRLIRGNNPSNTIILEELNPYSLGSLLALYEHKVYVQSVIWNINPFDQWGVERGKHLAKDILQALQAETDQSSFDSSTERLINYVLKIKGNRP.

Glu351 (proton donor) is an active-site residue. Active-site residues include His382 and Lys509.

The protein belongs to the GPI family.

It localises to the cytoplasm. The catalysed reaction is alpha-D-glucose 6-phosphate = beta-D-fructose 6-phosphate. It participates in carbohydrate biosynthesis; gluconeogenesis. Its pathway is carbohydrate degradation; glycolysis; D-glyceraldehyde 3-phosphate and glycerone phosphate from D-glucose: step 2/4. Functionally, catalyzes the reversible isomerization of glucose-6-phosphate to fructose-6-phosphate. This chain is Glucose-6-phosphate isomerase, found in Coxiella burnetii (strain CbuG_Q212) (Coxiella burnetii (strain Q212)).